The sequence spans 103 residues: Large ribosomal subunit protein uL24 (103 aa).

This sequence belongs to the universal ribosomal protein uL24 family. In terms of assembly, part of the 50S ribosomal subunit.

Functionally, one of two assembly initiator proteins, it binds directly to the 5'-end of the 23S rRNA, where it nucleates assembly of the 50S subunit. In terms of biological role, one of the proteins that surrounds the polypeptide exit tunnel on the outside of the subunit. This Sinorhizobium fredii (strain NBRC 101917 / NGR234) protein is Large ribosomal subunit protein uL24.